A 313-amino-acid polypeptide reads, in one-letter code: Hydroxyphenylpyruvate reductase (313 aa).

NADP(+) is bound by residues 152 to 155, 174 to 176, and Ile230; these read LGRI and SRS. The active site involves Arg232. Position 256 (Asp256) interacts with NADP(+). Glu261 is a catalytic residue. The Proton donor role is filled by His279.

Belongs to the D-isomer specific 2-hydroxyacid dehydrogenase family.

It carries out the reaction (2R)-2-hydroxy-3-(4-hydroxyphenyl)propanoate + NAD(+) = 3-(4-hydroxyphenyl)pyruvate + NADH + H(+). It catalyses the reaction (2R)-2-hydroxy-3-(4-hydroxyphenyl)propanoate + NADP(+) = 3-(4-hydroxyphenyl)pyruvate + NADPH + H(+). The enzyme catalyses (2R)-3-(3,4-dihydroxyphenyl)lactate + NADP(+) = 3-(3,4-dihydroxyphenyl)pyruvate + NADPH + H(+). The catalysed reaction is (2R)-3-(3,4-dihydroxyphenyl)lactate + NAD(+) = 3-(3,4-dihydroxyphenyl)pyruvate + NADH + H(+). Its function is as follows. Catalyzes the NAD(P)H-dependent reduction of 4-hydroxyphenylpyruvate to 4-hydroxyphenyllactate and 3,4-dihydroxyphenylpyruvate to 3,4-dihydroxyphenyllactate in the biosynthesis of rosmarinic acid. Rosmarinic acid is an ester of caffeic acid and 3,4-dihydroxyphenyllactic acid. NADP is the preferred substrate. This Plectranthus scutellarioides (Coleus) protein is Hydroxyphenylpyruvate reductase (HPPR).